A 501-amino-acid chain; its full sequence is Dye-decolorizing peroxidase (501 aa).

The signal sequence occupies residues methionine 1–alanine 21. Positions arginine 22–valine 60 are excised as a propeptide. The active-site Proton acceptor is the aspartate 228. A glycan (N-linked (GlcNAc...) asparagine) is linked at asparagine 352. Histidine 367 provides a ligand contact to heme. N-linked (GlcNAc...) asparagine glycosylation is present at asparagine 403.

Belongs to the DyP-type peroxidase family. Requires heme b as cofactor.

It localises to the secreted. The catalysed reaction is Reactive Blue 5 + 2 H2O2 = 2,2'-disulfonyl azobenzene + 3-[(4-amino-6-chloro-1,3,5-triazin-2-yl)amino]benzenesulfonate + phthalate + 2 H2O + 2 H(+). It catalyses the reaction 2 a phenolic donor + H2O2 = 2 a phenolic radical donor + 2 H2O. Its function is as follows. Manganese-independent peroxidase that is able to convert a large number of compounds, but its physiological substrate is not known. In addition to classic peroxidase substrates (e.g. 2,6-dimethoxyphenol), oxidizes dyes such as Reactive Blue 5 and Reactive Black 5. The protein is Dye-decolorizing peroxidase of Exidia glandulosa (Black witch's butter).